The sequence spans 727 residues: Glucans biosynthesis glucosyltransferase H (727 aa).

Positions 18–38 are disordered; the sequence is SAMPNERPGAMEPQNLSKMPE. Helical transmembrane passes span 58-78, 97-117, 278-298, 408-428, 460-480, 496-516, and 572-592; these read FLVV…MGAV, VNFC…LILL, LQQF…GWWV, IMAY…LMLA, LFYI…LLLL, IFSV…MMFI, and LLAW…ISAW.

This sequence belongs to the glycosyltransferase 2 family. OpgH subfamily.

It localises to the cell inner membrane. The protein operates within glycan metabolism; osmoregulated periplasmic glucan (OPG) biosynthesis. Functionally, involved in the biosynthesis of osmoregulated periplasmic glucans (OPGs). This chain is Glucans biosynthesis glucosyltransferase H, found in Shewanella baltica (strain OS223).